Reading from the N-terminus, the 198-residue chain is Probable nicotinate-nucleotide adenylyltransferase (198 aa).

The protein belongs to the NadD family.

It carries out the reaction nicotinate beta-D-ribonucleotide + ATP + H(+) = deamido-NAD(+) + diphosphate. The protein operates within cofactor biosynthesis; NAD(+) biosynthesis; deamido-NAD(+) from nicotinate D-ribonucleotide: step 1/1. Functionally, catalyzes the reversible adenylation of nicotinate mononucleotide (NaMN) to nicotinic acid adenine dinucleotide (NaAD). The chain is Probable nicotinate-nucleotide adenylyltransferase from Herpetosiphon aurantiacus (strain ATCC 23779 / DSM 785 / 114-95).